We begin with the raw amino-acid sequence, 162 residues long: Endoribonuclease YbeY (162 aa).

H128, H132, and H138 together coordinate Zn(2+).

This sequence belongs to the endoribonuclease YbeY family. The cofactor is Zn(2+).

It localises to the cytoplasm. Its function is as follows. Single strand-specific metallo-endoribonuclease involved in late-stage 70S ribosome quality control and in maturation of the 3' terminus of the 16S rRNA. This Lactococcus lactis subsp. lactis (strain IL1403) (Streptococcus lactis) protein is Endoribonuclease YbeY.